The chain runs to 329 residues: Sulfate-binding protein (329 aa).

Residues 1–19 form the signal peptide; that stretch reads MNKWGVGLTFLLAATSVMA.

This sequence belongs to the prokaryotic sulfate-binding protein family.

The protein localises to the periplasm. Its function is as follows. This protein specifically binds sulfate and is involved in its transmembrane transport. This Escherichia coli (strain K12) protein is Sulfate-binding protein (sbp).